Consider the following 238-residue polypeptide: Ribonuclease PH (238 aa).

Residues Arg-86 and 124 to 126 (GTR) each bind phosphate.

This sequence belongs to the RNase PH family. Homohexameric ring arranged as a trimer of dimers.

It catalyses the reaction tRNA(n+1) + phosphate = tRNA(n) + a ribonucleoside 5'-diphosphate. Functionally, phosphorolytic 3'-5' exoribonuclease that plays an important role in tRNA 3'-end maturation. Removes nucleotide residues following the 3'-CCA terminus of tRNAs; can also add nucleotides to the ends of RNA molecules by using nucleoside diphosphates as substrates, but this may not be physiologically important. Probably plays a role in initiation of 16S rRNA degradation (leading to ribosome degradation) during starvation. The protein is Ribonuclease PH of Psychrobacter cryohalolentis (strain ATCC BAA-1226 / DSM 17306 / VKM B-2378 / K5).